The sequence spans 859 residues: Envelope glycoprotein (859 aa).

The propeptide occupies 1-6 (MVSIAF). Residues 7-614 (YGGIPGGIST…KDLWSHIGNW (608 aa)) are Extracellular-facing. N-linked (GlcNAc...) asparagine; by host glycosylation is found at asparagine 40, asparagine 112, asparagine 141, asparagine 148, asparagine 184, asparagine 201, asparagine 214, asparagine 233, asparagine 244, asparagine 282, asparagine 313, asparagine 340, asparagine 346, asparagine 368, asparagine 399, asparagine 406, asparagine 411, and asparagine 422. Residues 446–466 (FGISAIVAAIVAATAIAASAT) form a fusion peptide region. Residues asparagine 483 and asparagine 490 are each glycosylated (N-linked (GlcNAc...) asparagine; by host). The segment at 498-513 (LIERQIKILYAMILQT) is immunosuppression. Residues asparagine 550 and asparagine 557 are each glycosylated (N-linked (GlcNAc...) asparagine; by host). 2 coiled-coil regions span residues 576–624 (ILTI…SIIK) and 663–699 (KKFY…YCKQ). The chain crosses the membrane as a helical span at residues 615 to 635 (IPGLGASIIKYIVMFLLIYLL). The Cytoplasmic segment spans residues 636 to 859 (LTSSPKILRA…TSHVSMPQYV (224 aa)).

The mature envelope protein (Env) consists of a trimer of SU-TM heterodimers attached by noncovalent interactions or by a labile interchain disulfide bond. Post-translationally, specific enzymatic cleavages in vivo yield mature proteins. Envelope glycoproteins are synthesized as an inactive precursor that is N-glycosylated and processed likely by host cell furin or by a furin-like protease in the Golgi to yield the mature SU and TM proteins. The cleavage site between SU and TM requires the minimal sequence [KR]-X-[KR]-R.

The protein localises to the virion membrane. It is found in the host cell membrane. In terms of biological role, the surface protein (SU) attaches the virus to the host cell by binding to its receptor. This interaction triggers the refolding of the transmembrane protein (TM) and is thought to activate its fusogenic potential by unmasking its fusion peptide. Fusion occurs at the host cell plasma membrane. The transmembrane protein (TM) acts as a class I viral fusion protein. Under the current model, the protein has at least 3 conformational states: pre-fusion native state, pre-hairpin intermediate state, and post-fusion hairpin state. During viral and target cell membrane fusion, the coiled coil regions (heptad repeats) assume a trimer-of-hairpins structure, positioning the fusion peptide in close proximity to the C-terminal region of the ectodomain. The formation of this structure appears to drive apposition and subsequent fusion of viral and target cell membranes. Membranes fusion leads to delivery of the nucleocapsid into the cytoplasm. In Equus asinus (Donkey), this protein is Envelope glycoprotein (env).